The sequence spans 233 residues: Biosynthetic peptidoglycan transglycosylase (233 aa).

A helical transmembrane segment spans residues 8 to 28 (LIALPVGIFIFFNAYVYGNII).

The protein belongs to the glycosyltransferase 51 family.

Its subcellular location is the cell inner membrane. The enzyme catalyses [GlcNAc-(1-&gt;4)-Mur2Ac(oyl-L-Ala-gamma-D-Glu-L-Lys-D-Ala-D-Ala)](n)-di-trans,octa-cis-undecaprenyl diphosphate + beta-D-GlcNAc-(1-&gt;4)-Mur2Ac(oyl-L-Ala-gamma-D-Glu-L-Lys-D-Ala-D-Ala)-di-trans,octa-cis-undecaprenyl diphosphate = [GlcNAc-(1-&gt;4)-Mur2Ac(oyl-L-Ala-gamma-D-Glu-L-Lys-D-Ala-D-Ala)](n+1)-di-trans,octa-cis-undecaprenyl diphosphate + di-trans,octa-cis-undecaprenyl diphosphate + H(+). It functions in the pathway cell wall biogenesis; peptidoglycan biosynthesis. Its function is as follows. Peptidoglycan polymerase that catalyzes glycan chain elongation from lipid-linked precursors. The sequence is that of Biosynthetic peptidoglycan transglycosylase from Neisseria gonorrhoeae (strain ATCC 700825 / FA 1090).